Reading from the N-terminus, the 228-residue chain is Translation initiation factor 6 (228 aa).

It belongs to the eIF-6 family.

Its function is as follows. Binds to the 50S ribosomal subunit and prevents its association with the 30S ribosomal subunit to form the 70S initiation complex. This Thermococcus onnurineus (strain NA1) protein is Translation initiation factor 6.